The primary structure comprises 70 residues: Protein SlyX homolog (70 aa).

The protein belongs to the SlyX family.

The sequence is that of Protein SlyX homolog from Shewanella frigidimarina (strain NCIMB 400).